We begin with the raw amino-acid sequence, 1315 residues long: Activating molecule in BECN1-regulated autophagy protein 1A (1315 aa).

WD repeat units follow at residues 50 to 89 (DSPRSTFLLAFSPDRSLMASTHVNHNIYITEVKSGKCVHS), 92 to 132 (GHRR…ESWL), and 134 to 174 (ESNS…TVVK). Disordered stretches follow at residues 294–322 (RVPSPPDEDPSDSASLEAQAHTFSSARTE), 342–409 (FSSV…QRTG), 426–463 (FQSPVYTSASDRWGSTPGTSSSRHRPPEEEGQSSSSSI), 502–526 (NNNMDPEQPGPSHYQSPYSGENPPH), 545–610 (SRRW…DTGQ), 630–660 (VYRQSASSRSANISQGALNQEMPEDTPDNDY), 681–736 (RDSV…PRNA), 985–1134 (HSDG…STGQ), 1181–1208 (GSQTGADAQNRTRLSPIPGPSSGAPESL), and 1286–1315 (LLSSSPSLSPVNNSNYSNSDSSYLGDEYGR). Over residues 351–360 (NMRNHSSSSG) the composition is skewed to polar residues. Positions 378 to 388 (PGREGGGRHPG) are enriched in basic and acidic residues. 2 stretches are compositionally biased toward polar residues: residues 394–409 (SGLNGQSSSMTPQRTG) and 426–435 (FQSPVYTSAS). Polar residues-rich tracts occupy residues 552–581 (GQPSSTERNTPWQPSSSAFHSVAPVSQSNE) and 633–647 (QSASSRSANISQGAL). Residues 696–715 (RPLSSNPSSLSPSPVPNAES) show a composition bias toward low complexity. The span at 716–725 (SEVDFEEFEE) shows a compositional bias: acidic residues. Low complexity predominate over residues 1009-1021 (PSSSRSGDRAGSS). Basic and acidic residues predominate over residues 1022–1031 (RTDRRSRRDI). Positions 1047–1060 (SVTSQGTQTQNQRL) are enriched in polar residues. 2 consecutive short sequence motifs (TQT motif) follow at residues 1053–1055 (TQT) and 1065–1067 (TQT). Basic and acidic residues predominate over residues 1061-1072 (QHAETQTDRDLP). The span at 1076 to 1090 (QQPSTSQGSQVTDAT) shows a compositional bias: polar residues. Residues 1091–1103 (ESLDFETLPEDSG) show a composition bias toward acidic residues. Polar residues-rich tracts occupy residues 1125 to 1134 (SEPSTDSTGQ) and 1181 to 1193 (GSQTGADAQNRTR). The span at 1286–1307 (LLSSSPSLSPVNNSNYSNSDSS) shows a compositional bias: low complexity.

This sequence belongs to the WD repeat AMBRA1 family. Component of the DCX(AMBRA1) E3 ubiquitin ligase complex.

Its subcellular location is the endoplasmic reticulum. It is found in the cytoplasm. The protein resides in the cytoskeleton. It localises to the cytoplasmic vesicle. The protein localises to the autophagosome. Its subcellular location is the mitochondrion. It is found in the cytosol. The protein resides in the nucleus. It localises to the cell junction. The protein localises to the focal adhesion. It participates in protein modification; protein ubiquitination. Its function is as follows. Substrate-recognition component of a DCX (DDB1-CUL4-X-box) E3 ubiquitin-protein ligase complex involved in cell cycle control and autophagy. The DCX(AMBRA1) complex specifically mediates the polyubiquitination of target proteins. Acts as an upstream master regulator of the transition from G1 to S cell phase: ambra1a specifically recognizes and binds phosphorylated cyclin-D (ccnd1, ccnd2 and ccnd3), leading to cyclin-D ubiquitination by the DCX(AMBRA1) complex and subsequent degradation. Acts as a regulator of Cul5-RING (CRL5) E3 ubiquitin-protein ligase complexes by mediating ubiquitination and degradation of Elongin-C (eloc) component of CRL5 complexes. Acts as a key regulator of autophagy by modulating the BECN1-PIK3C3 complex: controls protein turnover during neuronal development, and regulates normal cell survival and proliferation. In normal conditions, ambra1a is tethered to the cytoskeleton via interaction with dyneins light chains. Upon autophagy induction, ambra1a is released from the cytoskeletal docking site to induce autophagosome nucleation by mediating ubiquitination of proteins involved in autophagy. Also acts as an activator of mitophagy. Required for skeletal muscle development. The protein is Activating molecule in BECN1-regulated autophagy protein 1A of Danio rerio (Zebrafish).